The chain runs to 311 residues: Ornithine carbamoyltransferase (311 aa).

Carbamoyl phosphate is bound by residues S54 to T57, Q81, R105, and H132 to Q135. L-ornithine-binding positions include N164, D228, and S232 to M233. Residues C268–L269 and R296 contribute to the carbamoyl phosphate site.

It belongs to the aspartate/ornithine carbamoyltransferase superfamily. OTCase family.

The protein resides in the cytoplasm. It catalyses the reaction carbamoyl phosphate + L-ornithine = L-citrulline + phosphate + H(+). It functions in the pathway amino-acid biosynthesis; L-arginine biosynthesis; L-arginine from L-ornithine and carbamoyl phosphate: step 1/3. Its function is as follows. Reversibly catalyzes the transfer of the carbamoyl group from carbamoyl phosphate (CP) to the N(epsilon) atom of ornithine (ORN) to produce L-citrulline. This chain is Ornithine carbamoyltransferase, found in Renibacterium salmoninarum (strain ATCC 33209 / DSM 20767 / JCM 11484 / NBRC 15589 / NCIMB 2235).